The chain runs to 116 residues: Large ribosomal subunit protein bL20c (116 aa).

It belongs to the bacterial ribosomal protein bL20 family.

The protein resides in the plastid. It localises to the chloroplast. Binds directly to 23S ribosomal RNA and is necessary for the in vitro assembly process of the 50S ribosomal subunit. It is not involved in the protein synthesizing functions of that subunit. This is Large ribosomal subunit protein bL20c (rpl20) from Marchantia polymorpha (Common liverwort).